Here is a 42-residue protein sequence, read N- to C-terminus: Aryl-alcohol dehydrogenase (42 aa).

The protein belongs to the zinc-containing alcohol dehydrogenase family. As to quaternary structure, homodimer. Zn(2+) serves as cofactor.

The enzyme catalyses an aromatic primary alcohol + NAD(+) = an aromatic aldehyde + NADH + H(+). In terms of biological role, oxidizes primary alcohols with an aromatic or cyclohex-1-ene ring. It is highly specific for benzyl alcohol. The polypeptide is Aryl-alcohol dehydrogenase (Acinetobacter guillouiae (Acinetobacter genomosp. 11)).